A 109-amino-acid polypeptide reads, in one-letter code: MSKVGPNPFLQFYLNAKNDFINWVSIIWGKIRMIALVITLIVAFIFLIKLIKSCIYLVSLCKGCLTKTLTFKNKIIKWNIWKKIKRRTPRESRLKDCPIYLNNPNFQLN.

The protein belongs to the tibrovirus protein U3 family.

The chain is Protein U3 (U3) from Tibrogargan virus (strain CS132) (TIBV).